Here is a 110-residue protein sequence, read N- to C-terminus: PCNA-associated factor (110 aa).

A Glycyl lysine isopeptide (Lys-Gly) (interchain with G-Cter in ubiquitin) cross-link involves residue Lys15. A D-box motif is present at residues 23–34 (RKVLGSSTFVTN). Lys24 is modified (N6-acetyllysine; alternate). A Glycyl lysine isopeptide (Lys-Gly) (interchain with G-Cter in ubiquitin); alternate cross-link involves residue Lys24. Ser28 bears the Phosphoserine mark. Residues 29–39 (STFVTNSSGSS) are compositionally biased toward low complexity. The segment at 29–110 (STFVTNSSGS…QPDHRDDENE (82 aa)) is disordered. Positions 61–71 (QKGIGEFFRLS) match the PIP-box motif. Ser71 is modified (phosphoserine). Residues 71 to 80 (SPKDSKKENQ) show a composition bias toward basic and acidic residues. The short motif at 77 to 79 (KEN) is the KEN box element. Residues 84–96 (EAGSSGLGKAKRK) carry the Initiation motif motif.

Interacts (when monoubiquitinated at Lys-15 and Lys-24) with PCNA. Interacts with isoform 2/p33ING1b of ING1. Interacts with BRCA1. Monoubiquitinated at Lys-15 and Lys-24 during normal S phase, promoting its association with PCNA. Also diubiquitinated at these 2 sites. Following DNA damage, monoubiquitin chains at Lys-15 and Lys-24 are probably extended, leading to disrupt the interaction with PCNA. Polyubiquitinated by the APC/C complex at the mitotic exit, leading to its degradation by the proteasome.

Its subcellular location is the nucleus. The protein localises to the cytoplasm. It is found in the perinuclear region. In terms of biological role, PCNA-binding protein that acts as a regulator of DNA repair during DNA replication. Following DNA damage, the interaction with PCNA is disrupted, facilitating the interaction between monoubiquitinated PCNA and the translesion DNA synthesis DNA polymerase eta (POLH) at stalled replisomes, facilitating the bypass of replication-fork-blocking lesions. Also acts as a regulator of centrosome number. This chain is PCNA-associated factor, found in Rattus norvegicus (Rat).